Here is a 311-residue protein sequence, read N- to C-terminus: MASKDFAIGMILLSQIMVGFLGNFFLLYHYSFLCFTRGMLQSTDLILKHLTIANSLVILSKGIPQTMAAFGLKDSLSDIGCKFVFYVHRVGRAVCVGNACLLSVFQVITISPSEFRWAELKLHAHKYIRSFILVLCWILNTLVNITVLLHVTGKWNSINSTKTNDYGYCSGGSRSRIPHSLHIVLLSSLDVLCLGLMTLASGSMVFILHRHKQQVQHIHGTNLSARSSPESRVTQSILVLVSTLCYFTRSPPSLHMSLFPNPSWWLLNTSALITACFPMVSPFVLMSRHPRIPRLGSACCGRNPQFPKLVR.

At 1-5 (MASKD) the chain is on the extracellular side. Residues 6–26 (FAIGMILLSQIMVGFLGNFFL) traverse the membrane as a helical segment. At 27 to 51 (LYHYSFLCFTRGMLQSTDLILKHLT) the chain is on the cytoplasmic side. The chain crosses the membrane as a helical span at residues 52–72 (IANSLVILSKGIPQTMAAFGL). At 73 to 92 (KDSLSDIGCKFVFYVHRVGR) the chain is on the extracellular side. The chain crosses the membrane as a helical span at residues 93 to 113 (AVCVGNACLLSVFQVITISPS). Residues 114-130 (EFRWAELKLHAHKYIRS) are Cytoplasmic-facing. Residues 131-151 (FILVLCWILNTLVNITVLLHV) form a helical membrane-spanning segment. Residues 152-187 (TGKWNSINSTKTNDYGYCSGGSRSRIPHSLHIVLLS) lie on the Extracellular side of the membrane. Asn159 carries N-linked (GlcNAc...) asparagine glycosylation. A helical membrane pass occupies residues 188–208 (SLDVLCLGLMTLASGSMVFIL). The Cytoplasmic portion of the chain corresponds to 209–232 (HRHKQQVQHIHGTNLSARSSPESR). The chain crosses the membrane as a helical span at residues 233–249 (VTQSILVLVSTLCYFTR). Topologically, residues 250-264 (SPPSLHMSLFPNPSW) are extracellular. Residues 265 to 285 (WLLNTSALITACFPMVSPFVL) form a helical membrane-spanning segment. Residues 286 to 311 (MSRHPRIPRLGSACCGRNPQFPKLVR) are Cytoplasmic-facing.

It belongs to the G-protein coupled receptor 1 family.

The protein resides in the cell membrane. Its function is as follows. Putative pheromone receptor. The polypeptide is Vomeronasal type-1 receptor 3 (VN1R3) (Homo sapiens (Human)).